The chain runs to 34 residues: Photosystem II reaction center protein Psb30 (34 aa).

The helical transmembrane segment at 6–26 threads the bilayer; it reads VIGQLIATGAIMLAGPAVIVL.

The protein belongs to the Psb30/Ycf12 family. In terms of assembly, PSII is composed of 1 copy each of membrane proteins PsbA, PsbB, PsbC, PsbD, PsbE, PsbF, PsbH, PsbI, PsbJ, PsbK, PsbL, PsbM, PsbT, PsbX, PsbY, PsbZ, Psb30/Ycf12, peripheral proteins of the oxygen-evolving complex and a large number of cofactors. It forms dimeric complexes.

It localises to the plastid. It is found in the chloroplast thylakoid membrane. In terms of biological role, a core subunit of photosystem II (PSII), probably helps stabilize the reaction center. The polypeptide is Photosystem II reaction center protein Psb30 (Trieres chinensis (Marine centric diatom)).